A 25-amino-acid chain; its full sequence is Small ribosomal subunit protein eS32 (25 aa).

A disordered region spans residues 1-25; it reads MRAKWRKKRMRRLKRKRRKMRQRSK.

This sequence belongs to the eukaryotic ribosomal protein eS32 family. In terms of assembly, component of the large ribosomal subunit.

It localises to the cytoplasm. Functionally, component of the small ribosomal subunit. The ribosome is a large ribonucleoprotein complex responsible for the synthesis of proteins in the cell. The chain is Small ribosomal subunit protein eS32 (rpl41) from Cyprinus carpio (Common carp).